The sequence spans 433 residues: Eukaryotic translation initiation factor 3 subunit E (433 aa).

The PCI domain maps to 217 to 390; that stretch reads FFNHGKGRDL…GHVVMGTQPL (174 aa).

It belongs to the eIF-3 subunit E family. As to quaternary structure, component of the eukaryotic translation initiation factor 3 (eIF-3) complex.

It localises to the cytoplasm. In terms of biological role, component of the eukaryotic translation initiation factor 3 (eIF-3) complex, which is involved in protein synthesis of a specialized repertoire of mRNAs and, together with other initiation factors, stimulates binding of mRNA and methionyl-tRNAi to the 40S ribosome. The eIF-3 complex specifically targets and initiates translation of a subset of mRNAs involved in cell proliferation. This is Eukaryotic translation initiation factor 3 subunit E (eIF3-S6) from Anopheles gambiae (African malaria mosquito).